The following is a 1813-amino-acid chain: U3 small nucleolar RNA-associated protein 10 (1813 aa).

HEAT repeat units lie at residues 245–283, 389–427, 428–464, 584–621, and 659–695; these read DVLI…KASL, SETI…LQFN, ESDT…DIMP, ADMQ…LASK, and IIHH…QDDS. Disordered stretches follow at residues 686–705 and 887–912; these read IRGP…STGV and DLGS…SSMD. A compositionally biased stretch (basic and acidic residues) spans 690 to 705; that stretch reads RSQDDSDRTRSESTGV. HEAT repeat units follow at residues 1058-1095, 1189-1228, 1265-1302, 1309-1347, 1398-1437, 1678-1715, and 1769-1806; these read QTID…AFEH, KIAV…KAHG, LSLV…SSND, ARVL…KYGK, EALP…HVPW, LASI…LAVA, and ALLP…ILGE.

This sequence belongs to the HEATR1/UTP10 family. Component of the ribosomal small subunit (SSU) processome.

The protein localises to the nucleus. The protein resides in the nucleolus. In terms of biological role, involved in nucleolar processing of pre-18S ribosomal RNA. Involved in ribosome biosynthesis. This chain is U3 small nucleolar RNA-associated protein 10, found in Coccidioides immitis (strain RS) (Valley fever fungus).